The sequence spans 319 residues: Cytochrome f (319 aa).

Positions 1–35 (MFQQMQKISLKLLKTTFLFLFATFILVGLPSTSQA) are cleaved as a signal peptide. Residues Tyr36, Cys56, Cys59, and His60 each coordinate heme. A helical membrane pass occupies residues 285-305 (IQGLIAFFISVIIAQTFLVLK).

This sequence belongs to the cytochrome f family. The 4 large subunits of the cytochrome b6-f complex are cytochrome b6, subunit IV (17 kDa polypeptide, petD), cytochrome f and the Rieske protein, while the 4 small subunits are PetG, PetL, PetM and PetN. The complex functions as a dimer. Heme is required as a cofactor.

It is found in the plastid. Its subcellular location is the chloroplast thylakoid membrane. Its function is as follows. Component of the cytochrome b6-f complex, which mediates electron transfer between photosystem II (PSII) and photosystem I (PSI), cyclic electron flow around PSI, and state transitions. This Chlorokybus atmophyticus (Soil alga) protein is Cytochrome f.